The chain runs to 644 residues: Zinc finger protein 74 (644 aa).

The 72-residue stretch at 43 to 114 folds into the KRAB domain; it reads VSFKDVAVDF…QREVPRGPCP (72 aa). 12 consecutive C2H2-type zinc fingers follow at residues 248–270, 276–298, 304–326, 332–354, 360–382, 388–410, 416–438, 444–466, 472–494, 500–522, 528–550, and 556–578; these read FVCG…RRWH, YKCD…RRIH, FFCG…QRIH, YKCS…LRVH, YRCG…HRIH, YQCG…EKIH, FKCS…QRTH, FKCA…RRIH, FKCN…RRIH, FDCS…QRIH, YKCS…QKIH, and FKCE…QRLH. A Glycyl lysine isopeptide (Lys-Gly) (interchain with G-Cter in SUMO2) cross-link involves residue lysine 582.

This sequence belongs to the krueppel C2H2-type zinc-finger protein family. Highly expressed in the fetal brain.

The protein localises to the nucleus. In terms of biological role, may play a role in RNA metabolism. This chain is Zinc finger protein 74 (ZNF74), found in Homo sapiens (Human).